The following is a 370-amino-acid chain: Putative transport protein YdiK (370 aa).

At 1–17 the chain is on the periplasmic side; the sequence is MVNVRQPRDVAQILLSV. The chain crosses the membrane as a helical span at residues 18 to 38; sequence LFLAIMIVACLWIVQPFILGF. A topological domain (cytoplasmic) is located at residue alanine 39. The helical transmembrane segment at 40 to 60 threads the bilayer; sequence WAGTVVIATWPVLLRLQKIMF. Over 61-65 the chain is Periplasmic; the sequence is GRRSL. The chain crosses the membrane as a helical span at residues 66–86; the sequence is AVLVMTLLLVMVFIIPIALLV. Over 87-106 the chain is Cytoplasmic; the sequence is NSIVDGSGPLIKAISSGDMT. A helical transmembrane segment spans residues 107-127; that stretch reads LPDLAWLNTIPVIGAKLYAGW. Topologically, residues 128–156 are periplasmic; that stretch reads HNLLDMGGTAIMAKVRPYIGTTTTWFVGQ. The chain crosses the membrane as a helical span at residues 157–177; that stretch reads AAHIGRFMVHCALMLLFSALL. Residues 178–213 lie on the Cytoplasmic side of the membrane; sequence YWRGEQVAQGIRHFATRLAGVRGDAAVLLAAQAIRA. A helical membrane pass occupies residues 214–234; that stretch reads VALGVVVTALVQAVLGGIGLA. Over 235–248 the chain is Periplasmic; sequence VSGVPYATLLTVLM. The chain crosses the membrane as a helical span at residues 249 to 269; that stretch reads ILSCLVQLGPLPVLIPAIIWL. Residues 270 to 274 lie on the Cytoplasmic side of the membrane; the sequence is YWTGD. Residues 275–295 form a helical membrane-spanning segment; sequence TTWGTVLLVWSGVVGTLDNVI. The Periplasmic segment spans residues 296-308; it reads RPMLIRMGADLPL. The helical transmembrane segment at 309 to 329 threads the bilayer; it reads ILILSGVIGGLIAFGMIGLFI. The Cytoplasmic portion of the chain corresponds to 330 to 370; the sequence is GPVLLAVSWRLFAAWVEEVPPPTDQPEEILEELGEIEKPNK.

It belongs to the autoinducer-2 exporter (AI-2E) (TC 2.A.86) family.

The protein localises to the cell inner membrane. The protein is Putative transport protein YdiK (ydiK) of Escherichia coli (strain K12).